The chain runs to 309 residues: Ribosomal RNA small subunit methyltransferase H (309 aa).

S-adenosyl-L-methionine-binding positions include 34–36 (GGH), Asp-54, Phe-80, Asp-102, and Gln-109.

This sequence belongs to the methyltransferase superfamily. RsmH family.

The protein localises to the cytoplasm. The enzyme catalyses cytidine(1402) in 16S rRNA + S-adenosyl-L-methionine = N(4)-methylcytidine(1402) in 16S rRNA + S-adenosyl-L-homocysteine + H(+). Functionally, specifically methylates the N4 position of cytidine in position 1402 (C1402) of 16S rRNA. In Cellvibrio japonicus (strain Ueda107) (Pseudomonas fluorescens subsp. cellulosa), this protein is Ribosomal RNA small subunit methyltransferase H.